Consider the following 21-residue polypeptide: Cytoplasmic filament protein A (21 aa).

The disordered stretch occupies residues 1-21 (AILELPQSPNVFHPEKPSAVG).

Its subcellular location is the cytoplasm. Its function is as follows. Component of the cytoplasmic filaments that run the length of the organism just underneath the cytoplasmic membrane. This is Cytoplasmic filament protein A (cfpA) from Treponema phagedenis.